The sequence spans 396 residues: Elongation factor Tu 1 (396 aa).

The tr-type G domain maps to 10–206; sequence KPHINVGTIG…AMDAHIPQPE (197 aa). The segment at 19–26 is G1; it reads GHVDHGKT. Residue 19-26 coordinates GTP; it reads GHVDHGKT. Threonine 26 lines the Mg(2+) pocket. A G2 region spans residues 60–64; sequence GITIA. A G3 region spans residues 81-84; that stretch reads DCPG. GTP is bound by residues 81–85 and 136–139; these read DCPGH and NKAD. Positions 136 to 139 are G4; that stretch reads NKAD. Positions 174–176 are G5; that stretch reads SAL.

Belongs to the TRAFAC class translation factor GTPase superfamily. Classic translation factor GTPase family. EF-Tu/EF-1A subfamily. As to quaternary structure, monomer.

The protein localises to the cytoplasm. It catalyses the reaction GTP + H2O = GDP + phosphate + H(+). In terms of biological role, GTP hydrolase that promotes the GTP-dependent binding of aminoacyl-tRNA to the A-site of ribosomes during protein biosynthesis. This chain is Elongation factor Tu 1, found in Halorhodospira halophila (strain DSM 244 / SL1) (Ectothiorhodospira halophila (strain DSM 244 / SL1)).